The primary structure comprises 168 residues: ATP synthase subunit b (168 aa).

Residues 10–30 (LYLGDMLFYLVSFLIMAALVW) traverse the membrane as a helical segment. Positions 61-80 (EAQKLAAKRQEELKGSRQEA) are disordered.

It belongs to the ATPase B chain family. As to quaternary structure, F-type ATPases have 2 components, F(1) - the catalytic core - and F(0) - the membrane proton channel. F(1) has five subunits: alpha(3), beta(3), gamma(1), delta(1), epsilon(1). F(0) has three main subunits: a(1), b(2) and c(10-14). The alpha and beta chains form an alternating ring which encloses part of the gamma chain. F(1) is attached to F(0) by a central stalk formed by the gamma and epsilon chains, while a peripheral stalk is formed by the delta and b chains.

Its subcellular location is the cell membrane. Its function is as follows. F(1)F(0) ATP synthase produces ATP from ADP in the presence of a proton or sodium gradient. F-type ATPases consist of two structural domains, F(1) containing the extramembraneous catalytic core and F(0) containing the membrane proton channel, linked together by a central stalk and a peripheral stalk. During catalysis, ATP synthesis in the catalytic domain of F(1) is coupled via a rotary mechanism of the central stalk subunits to proton translocation. Component of the F(0) channel, it forms part of the peripheral stalk, linking F(1) to F(0). The polypeptide is ATP synthase subunit b (Limosilactobacillus fermentum (strain NBRC 3956 / LMG 18251) (Lactobacillus fermentum)).